The chain runs to 178 residues: Gamma-crystallin M1 (178 aa).

Beta/gamma crystallin 'Greek key' domains lie at 2–40 (GKII…RVES) and 41–86 (GCFM…RMIP). Positions 87-91 (PYRGS) are connecting peptide. Beta/gamma crystallin 'Greek key' domains are found at residues 92 to 132 (YRMR…HVMD) and 133 to 175 (GHWL…RRIT).

It belongs to the beta/gamma-crystallin family. In terms of assembly, monomer.

In terms of biological role, crystallins are the dominant structural components of the vertebrate eye lens. The sequence is that of Gamma-crystallin M1 from Cyprinus carpio (Common carp).